A 307-amino-acid chain; its full sequence is D-alanine--D-alanine ligase (307 aa).

In terms of domain architecture, ATP-grasp spans 101 to 301 (KTVMRAAGVS…FGELVRWMVE (201 aa)). An ATP-binding site is contributed by 127–182 (PLTPPYVVKPIAEGSSMGVIIVRDERSHPPQILASDEWVYGEEVLAETYVAGRELT). Mg(2+) contacts are provided by aspartate 251, glutamate 268, and asparagine 270.

This sequence belongs to the D-alanine--D-alanine ligase family. Mg(2+) is required as a cofactor. It depends on Mn(2+) as a cofactor.

The protein localises to the cytoplasm. The enzyme catalyses 2 D-alanine + ATP = D-alanyl-D-alanine + ADP + phosphate + H(+). It functions in the pathway cell wall biogenesis; peptidoglycan biosynthesis. In terms of biological role, cell wall formation. The sequence is that of D-alanine--D-alanine ligase from Methylorubrum extorquens (strain CM4 / NCIMB 13688) (Methylobacterium extorquens).